The sequence spans 461 residues: D-phenylhydantoinase (461 aa).

A divalent metal cation is bound by residues histidine 59, histidine 61, and lysine 151. Lysine 151 carries the N6-carboxylysine modification. Position 156 (tyrosine 156) interacts with substrate. A divalent metal cation-binding residues include histidine 182 and histidine 239. Serine 286 contacts substrate. Aspartate 313 contacts a divalent metal cation. Substrate is bound at residue asparagine 335.

This sequence belongs to the metallo-dependent hydrolases superfamily. Hydantoinase/dihydropyrimidinase family. As to quaternary structure, homotetramer. The cofactor is a divalent metal cation. Carboxylation allows a single lysine to coordinate two divalent metal cations.

The enzyme catalyses D-5-phenylhydantoin + H2O = N-carbamoyl-D-phenylglycine + H(+). Functionally, catalyzes the stereospecific hydrolysis of the cyclic amide bond of D-hydantoin derivatives with an aromatic side chains at the 5'-position. Has no activity on dihydropyrimidines. The physiological function is unknown. The polypeptide is D-phenylhydantoinase (Escherichia coli O6:K15:H31 (strain 536 / UPEC)).